We begin with the raw amino-acid sequence, 305 residues long: Glycine--tRNA ligase alpha subunit (305 aa).

This sequence belongs to the class-II aminoacyl-tRNA synthetase family. Tetramer of two alpha and two beta subunits.

The protein localises to the cytoplasm. The catalysed reaction is tRNA(Gly) + glycine + ATP = glycyl-tRNA(Gly) + AMP + diphosphate. The protein is Glycine--tRNA ligase alpha subunit of Streptococcus pneumoniae (strain CGSP14).